The following is a 254-amino-acid chain: 3-deoxy-manno-octulosonate cytidylyltransferase (254 aa).

This sequence belongs to the KdsB family.

Its subcellular location is the cytoplasm. It carries out the reaction 3-deoxy-alpha-D-manno-oct-2-ulosonate + CTP = CMP-3-deoxy-beta-D-manno-octulosonate + diphosphate. Its pathway is nucleotide-sugar biosynthesis; CMP-3-deoxy-D-manno-octulosonate biosynthesis; CMP-3-deoxy-D-manno-octulosonate from 3-deoxy-D-manno-octulosonate and CTP: step 1/1. It functions in the pathway bacterial outer membrane biogenesis; lipopolysaccharide biosynthesis. Activates KDO (a required 8-carbon sugar) for incorporation into bacterial lipopolysaccharide in Gram-negative bacteria. This chain is 3-deoxy-manno-octulosonate cytidylyltransferase, found in Tolumonas auensis (strain DSM 9187 / NBRC 110442 / TA 4).